We begin with the raw amino-acid sequence, 1414 residues long: Phenyloxazoline synthase MbtB (1414 aa).

The 74-residue stretch at 5 to 78 (TACSEIIRAE…AWSQLVSAGT (74 aa)) folds into the Carrier 1 domain. Serine 39 carries the post-translational modification O-(pantetheine 4'-phosphoryl)serine. Residues 96-394 (EGEPFPVAPM…SSLLLDVDLT (299 aa)) form a condensation/cyclization region. Residues 579–975 (SYAQLRDQAS…RLPGVHAAAA (397 aa)) form an adenylation region. A Carrier 2 domain is found at 1057–1135 (APRTVLQRAL…ALAQLLTGRE (79 aa)). Serine 1094 bears the O-(pantetheine 4'-phosphoryl)serine mark. The interval 1188–1413 (GAVLVFPHAG…AVARMVSADV (226 aa)) is thioesterase.

This sequence belongs to the ATP-dependent AMP-binding enzyme family. MbtB subfamily. The cofactor is pantetheine 4'-phosphate. 4'-phosphopantetheine is transferred from CoA to a specific serine in each of the two carrier protein domains, leading to their activation from apo to holo forms.

It functions in the pathway siderophore biosynthesis; mycobactin biosynthesis. Involved in the initial steps of the mycobactin biosynthetic pathway. Putatively couples activated salicylic acid with serine or threonine and cyclizes this precursor to the hydroxyphenyloxazoline ring system present in this class of siderophores. Essential for growth in macrophages. This Mycobacterium tuberculosis (strain CDC 1551 / Oshkosh) protein is Phenyloxazoline synthase MbtB (mbtB).